Consider the following 70-residue polypeptide: Small ribosomal subunit protein bS21 (70 aa).

It belongs to the bacterial ribosomal protein bS21 family.

The polypeptide is Small ribosomal subunit protein bS21 (Campylobacter jejuni subsp. jejuni serotype O:23/36 (strain 81-176)).